A 566-amino-acid chain; its full sequence is Deformed epidermal autoregulatory factor 1 homolog (566 aa).

Disordered stretches follow at residues 33-62 and 163-191; these read AESEAEEPVLSRDEDSEEDADSEAERETRR and GLKGPAAPLTPGPQSPPTPLAPGQEKGGT. A compositionally biased stretch (pro residues) spans 170-182; sequence PLTPGPQSPPTPL. Residue T172 is modified to Phosphothreonine. S177 carries the post-translational modification Phosphoserine. Phosphothreonine is present on T180. The 81-residue stretch at 194–274 folds into the SAND domain; it reads NWDPSVYDSE…QCLIQDGILN (81 aa). The short motif at 300–306 is the Nuclear localization signal element; that stretch reads PYKRRKK. The interval 404–479 is interaction with LMO4; the sequence is IAPFPEAALP…QLKTLFEQAK (76 aa). Position 433 is a phosphothreonine (T433). Phosphoserine occurs at positions 444 and 449. Zn(2+)-binding residues include C505, C508, C516, C519, C525, C529, H537, and C541. The MYND-type zinc finger occupies 505–541; the sequence is CVNCGREAMSECTGCHKVNYCSTFCQRKDWKDHQHVC.

Homodimer. Isoform 1 and isoform 2 may form a heterodimer. May interact with the corepressors NCOR1 and NCRO2. Identified in a complex with XRCC5 and XRCC6. Interacts (via the SAND domain) with the DNA-PK complex subunit XRCC6; the interaction is direct with XRCC6 and may be inhibited by DNA-binding. Interacts with LMO4; LMO4 blocks export from nucleus. Interacts with LMO2 and CLIM2. Post-translationally, may be phosphorylated by DNA-PK complex in a DNA independent manner (in vitro). In terms of tissue distribution, ubiquitously expressed during embryogenesis, with higher expression in regions of the central nervous system, dorsal root ganglia, submandibular gland, epidermis and breast. In 12-week-old NOD mice, expression of isoform 2 is sevenfold higher in lymph node stromal elements than in T-cells and tenfold higher than in B-cells.

It is found in the nucleus. Its subcellular location is the cytoplasm. In terms of biological role, transcription factor that binds to sequence with multiple copies of 5'-TTC[CG]G-3' present in its own promoter and that of the HNRPA2B1 gene. Down-regulates transcription of these genes. Binds to the retinoic acid response element (RARE) 5'-AGGGTTCACCGAAAGTTCA-3'. Activates the proenkephalin gene independently of promoter binding, probably through protein-protein interaction. Regulates epithelial cell proliferation and side-branching in the mammary gland. Required for neural tube closure and skeletal patterning. Controls the expression of peripheral tissue antigens in pancreatic lymph nodes. Isoform 1 displays greater transcriptional activity than isoform 2. Isoform 2 may inhibit transcriptional activity of isoform 1 by interacting with it and retaining it in the cytoplasm. Transcriptional activator of EIF4G3. May also involved in behavior. The sequence is that of Deformed epidermal autoregulatory factor 1 homolog (Deaf1) from Mus musculus (Mouse).